A 66-amino-acid chain; its full sequence is Beta-mammal toxin Cv5 (66 aa).

The 66-residue stretch at 1–66 (KEGYIVNYYD…VWPLPKKKCN (66 aa)) folds into the LCN-type CS-alpha/beta domain. Cystine bridges form between cysteine 12-cysteine 65, cysteine 16-cysteine 41, cysteine 25-cysteine 46, and cysteine 29-cysteine 48.

Expressed by the venom gland.

The protein resides in the secreted. With respect to regulation, is susceptible to be neutralized by human antibodies scFvs 10FG2 and HV. Beta toxins bind voltage-independently at site-4 of sodium channels (Nav) and reduces peak current and shifts the voltage of activation toward more negative potentials thereby affecting sodium channel activation and promoting spontaneous and repetitive firing. This toxin is moderately toxic to mice. The polypeptide is Beta-mammal toxin Cv5 (Centruroides villegasi (Scorpion)).